A 58-amino-acid chain; its full sequence is DNA-directed RNA polymerases I, II, and III subunit RPABC4 (58 aa).

Residues Cys-19, Cys-22, Cys-36, and Cys-39 each coordinate Zn(2+). The segment at 19–39 (CGECHTENEIKSRDPIRCREC) adopts a C4-type zinc-finger fold.

Belongs to the archaeal Rpo12/eukaryotic RPC10 RNA polymerase subunit family. In terms of assembly, component of the RNA polymerase I (Pol I), RNA polymerase II (Pol II) and RNA polymerase III (Pol III) complexes consisting of at least 13, 12 and 17 subunits, respectively. Pol I complex consists of a ten-subunit catalytic core composed of POLR1A/RPA1, POLR1B/RPA2, POLR1C/RPAC1, POLR1D/RPAC2, POLR1H/RPA12, POLR2E/RPABC1, POLR2F/RPABC2, POLR2H/RPABC3, POLR2K/RPABC4 and POLR2L/RPABC5; a mobile stalk subunit POLR1F/RPA43 protruding from the core and additional subunits homologous to general transcription factors POLR1E/RPA49 and POLR1G/RPA34. Part of Pol I pre-initiation complex (PIC), in which Pol I core assembles with RRN3 and promoter-bound UTBF and SL1/TIF-IB complex. Pol II complex contains a ten-subunit catalytic core composed of POLR2A/RPB1, POLR2B/RPB2, POLR2C/RPB3, POLR2I/RPB9, POLR2J/RPB11, POLR2E/RPABC1, POLR2F/RPABC2, POLR2H/RPABC3, POLR2K/RPABC4 and POLR2L/RPABC5 and a mobile stalk composed of two subunits POLR2D/RPB4 and POLR2G/RPB7. Part of Pol II(G) complex, in which Pol II core associates with an additional subunit POLR2M; unlike conventional Pol II, Pol II(G) functions as a transcriptional repressor. Part of TBP-based Pol II pre-initiation complex (PIC), in which Pol II core assembles with general transcription factors and other specific initiation factors including GTF2E1, GTF2E2, GTF2F1, GTF2F2, TCEA1, ERCC2, ERCC3, GTF2H2, GTF2H3, GTF2H4, GTF2H5, GTF2A1, GTF2A2, GTF2B and TBP; this large multi-subunit PIC complex mediates DNA unwinding and targets Pol II core to the transcription start site where the first phosphodiester bond forms. Pol III complex consists of a ten-subunit catalytic core composed of POLR3A/RPC1, POLR3B/RPC2, POLR1C/RPAC1, POLR1D/RPAC2, POLR3K/RPC10, POLR2E/RPABC1, POLR2F/RPABC2, POLR2H/RPABC3, POLR2K/RPABC4 and POLR2L/RPABC5; a mobile stalk composed of two subunits POLR3H/RPC8 and CRCP/RPC9, protruding from the core and functioning primarily in transcription initiation; and additional subunits homologous to general transcription factors of the RNA polymerase II machinery, POLR3C/RPC3-POLR3F/RPC6-POLR3G/RPC7 heterotrimer required for transcription initiation and POLR3D/RPC4-POLR3E/RPC5 heterodimer involved in both transcription initiation and termination.

It is found in the nucleus. It localises to the nucleolus. DNA-dependent RNA polymerase catalyzes the transcription of DNA into RNA using the four ribonucleoside triphosphates as substrates. Common component of RNA polymerases I, II and III which synthesize ribosomal RNA precursors, mRNA precursors and many functional non-coding RNAs, and a small RNAs, such as 5S rRNA and tRNAs, respectively. This chain is DNA-directed RNA polymerases I, II, and III subunit RPABC4 (POLR2K), found in Bos taurus (Bovine).